The chain runs to 315 residues: Secreted mono- and diacylglycerol lipase LIP2 (315 aa).

The signal sequence occupies residues 1–21; that stretch reads MACFRVILYLSVIFFVQCVFA. The cysteines at positions 68 and 308 are disulfide-linked. Asn74 is a glycosylation site (N-linked (GlcNAc...) asparagine). Residue Ser182 is the Nucleophile of the active site. The active site involves Asp240. An N-linked (GlcNAc...) asparagine glycan is attached at Asn265. His292 is an active-site residue.

Belongs to the AB hydrolase superfamily. Lipase family. Class 3 subfamily.

The protein localises to the secreted. It carries out the reaction a monoacylglycerol + H2O = glycerol + a fatty acid + H(+). The catalysed reaction is a diacylglycerol + H2O = a monoacylglycerol + a fatty acid + H(+). Secreted lipase involved in Dandruff and seborrheic dermatitis (D/SD) probably via lipase-mediated breakdown of sebaceous lipids and release of irritating free fatty acids. Shows activity against monoglyceride and diglyceride substrates and generates free oleic acid from the substrates mono- and diolein. Able to cleave the oleic acid from both the 1 and the 2 position of the glycerol backbone as 1,2 isomers of diolein were converted into oleic acid and glycerol. Due to an absence of fatty acid synthase genes in Malassezia species, secretory lipases are essential for the yeast to generate free fatty acids from degradation of sebum and assimilate them as lipid sources for growth. Plays an essential role at the pathogen-host interface during disease progression. Also performs the reverse reaction to build diacylglycerols from monoacylglycerols. The protein is Secreted mono- and diacylglycerol lipase LIP2 of Malassezia restricta (strain ATCC 96810 / NBRC 103918 / CBS 7877) (Seborrheic dermatitis infection agent).